The sequence spans 103 residues: Ig lambda chain C region (103 aa).

The 94-residue stretch at 6–99 (PTITLFPPSK…NGTSITKTLK (94 aa)) folds into the Ig-like domain. C28 and C85 are disulfide-bonded.

In Gallus gallus (Chicken), this protein is Ig lambda chain C region.